We begin with the raw amino-acid sequence, 103 residues long: N(4)-acetylcytidine amidohydrolase (103 aa).

The 96-residue stretch at 6–101 (ITFFQRFQDD…QTQFYVIEFK (96 aa)) folds into the ASCH domain. The active-site Proton acceptor is the lysine 21. The Nucleophile role is filled by threonine 24. Glutamate 74 serves as the catalytic Proton donor.

This sequence belongs to the N(4)-acetylcytidine amidohydrolase family.

It carries out the reaction N(4)-acetylcytidine + H2O = cytidine + acetate + H(+). It catalyses the reaction N(4)-acetyl-2'-deoxycytidine + H2O = 2'-deoxycytidine + acetate + H(+). The catalysed reaction is N(4)-acetylcytosine + H2O = cytosine + acetate + H(+). In terms of biological role, catalyzes the hydrolysis of N(4)-acetylcytidine (ac4C). In Escherichia coli (strain K12 / MC4100 / BW2952), this protein is N(4)-acetylcytidine amidohydrolase (yqfB).